The following is a 447-amino-acid chain: Probable glycine dehydrogenase (decarboxylating) subunit 1 (447 aa).

The protein belongs to the GcvP family. N-terminal subunit subfamily. In terms of assembly, the glycine cleavage system is composed of four proteins: P, T, L and H. In this organism, the P 'protein' is a heterodimer of two subunits.

The enzyme catalyses N(6)-[(R)-lipoyl]-L-lysyl-[glycine-cleavage complex H protein] + glycine + H(+) = N(6)-[(R)-S(8)-aminomethyldihydrolipoyl]-L-lysyl-[glycine-cleavage complex H protein] + CO2. The glycine cleavage system catalyzes the degradation of glycine. The P protein binds the alpha-amino group of glycine through its pyridoxal phosphate cofactor; CO(2) is released and the remaining methylamine moiety is then transferred to the lipoamide cofactor of the H protein. The chain is Probable glycine dehydrogenase (decarboxylating) subunit 1 from Maricaulis maris (strain MCS10) (Caulobacter maris).